A 349-amino-acid polypeptide reads, in one-letter code: Phenylalanine--tRNA ligase alpha subunit (349 aa).

Glutamate 264 serves as a coordination point for Mg(2+).

It belongs to the class-II aminoacyl-tRNA synthetase family. Phe-tRNA synthetase alpha subunit type 1 subfamily. As to quaternary structure, tetramer of two alpha and two beta subunits. The cofactor is Mg(2+).

The protein localises to the cytoplasm. The catalysed reaction is tRNA(Phe) + L-phenylalanine + ATP = L-phenylalanyl-tRNA(Phe) + AMP + diphosphate + H(+). The sequence is that of Phenylalanine--tRNA ligase alpha subunit from Myxococcus xanthus (strain DK1622).